The chain runs to 178 residues: Conodipine-P1 (178 aa).

The N-terminal stretch at 1-24 (MKLLAPVLWAMAALGVTWLVAVDS) is a signal peptide. A 4-hydroxyproline; partial mark is found at Pro38, Pro42, and Pro49. Residue His54 is part of the active site. A propeptide spans 98–130 (KREVTSHRATSIAHSRLWKTALDQKSFLNRKAR) (interchain peptide). The residue at position 131 (Gln131) is a Pyrrolidone carboxylic acid. Position 137 is a 4-hydroxyproline; partial (Pro137).

Belongs to the phospholipase A2 family. Group IX subfamily. In terms of assembly, heterodimer of an alpha and a beta chain; probably disulfide-linked. Ca(2+) serves as cofactor. As to expression, expressed by the venom duct.

The protein localises to the secreted. It catalyses the reaction a 1,2-diacyl-sn-glycero-3-phosphocholine + H2O = a 1-acyl-sn-glycero-3-phosphocholine + a fatty acid + H(+). Its function is as follows. Catalyzes the calcium-dependent hydrolysis of the 2-acyl groups in 3-sn-phosphoglycerides. This Conus purpurascens (Purple cone) protein is Conodipine-P1.